Here is a 345-residue protein sequence, read N- to C-terminus: uncharacterized protein (345 aa).

Disordered stretches follow at residues 1–24 (MGLE…ENRK) and 296–345 (MTAH…LNES). Over residues 304–323 (SDYDNDDDTDGIINETDYEL) the composition is skewed to acidic residues. A compositionally biased stretch (polar residues) spans 324-345 (DTSQSEFATLTTSSNKSILNES).

This is an uncharacterized protein from Schizosaccharomyces pombe (strain 972 / ATCC 24843) (Fission yeast).